Reading from the N-terminus, the 416-residue chain is Calreticulin (416 aa).

Residues 1–27 (MATQRRANPSSLHLITVFSLLVAVVSA) form the signal peptide. The N-linked (GlcNAc...) asparagine glycan is linked to Asn59. A disulfide bond links Cys113 and Cys145. 4 residues coordinate an alpha-D-glucoside: Tyr117, Lys119, Tyr136, and Asp143. The N-linked (GlcNAc...) asparagine glycan is linked to Asn159. 7 tandem repeats follow at residues 199–210 (KQSGSLYSDWDL), 218–229 (DPSAKKPEDWDE), 235–246 (DPEDKKPEGYDD), 253–264 (DPDAKKPEDWDD), 268–278 (GEWTAPTIPNP), 282–292 (GPWKPKKIKNP), and 296–306 (GKWKAPLIDNP). The segment at 199–264 (KQSGSLYSDW…DAKKPEDWDD (66 aa)) is 4 X approximate repeats. Basic and acidic residues predominate over residues 215–225 (TIKDPSAKKPE). Positions 215–286 (TIKDPSAKKP…NPEYKGPWKP (72 aa)) are disordered. 2 stretches are compositionally biased toward acidic residues: residues 226–236 (DWDEKEFIDDP) and 244–253 (YDDIPEEITD). The interval 268 to 306 (GEWTAPTIPNPEYKGPWKPKKIKNPNYKGKWKAPLIDNP) is 3 X approximate repeats. Glu326 serves as a coordination point for an alpha-D-glucoside. Over residues 355-380 (TWGKQKDAEKAAFEEAEKKREEEESK) the composition is skewed to basic and acidic residues. The segment at 355 to 416 (TWGKQKDAEK…SKDDEAHDEL (62 aa)) is disordered. Acidic residues predominate over residues 386-403 (SDAEEDDDADDDSDDADD). The segment covering 404-416 (KSESKDDEAHDEL) has biased composition (basic and acidic residues). The short motif at 413-416 (HDEL) is the Prevents secretion from ER element.

It belongs to the calreticulin family.

The protein resides in the endoplasmic reticulum lumen. Its function is as follows. Molecular calcium-binding chaperone promoting folding, oligomeric assembly and quality control in the ER via the calreticulin/calnexin cycle. This lectin may interact transiently with almost all of the monoglucosylated glycoproteins that are synthesized in the ER. The protein is Calreticulin (CAL1) of Nicotiana plumbaginifolia (Leadwort-leaved tobacco).